A 408-amino-acid polypeptide reads, in one-letter code: LL-diaminopimelate aminotransferase (408 aa).

The substrate site is built by Y15 and G42. Pyridoxal 5'-phosphate contacts are provided by residues Y72, 108-109 (SK), Y132, N187, Y218, and 246-248 (SFS). Substrate is bound by residues K109, Y132, and N187. An N6-(pyridoxal phosphate)lysine modification is found at K249. Pyridoxal 5'-phosphate is bound by residues R257 and N292. Residues N292 and R388 each contribute to the substrate site.

Belongs to the class-I pyridoxal-phosphate-dependent aminotransferase family. LL-diaminopimelate aminotransferase subfamily. Homodimer. Pyridoxal 5'-phosphate is required as a cofactor.

The catalysed reaction is (2S,6S)-2,6-diaminopimelate + 2-oxoglutarate = (S)-2,3,4,5-tetrahydrodipicolinate + L-glutamate + H2O + H(+). It participates in amino-acid biosynthesis; L-lysine biosynthesis via DAP pathway; LL-2,6-diaminopimelate from (S)-tetrahydrodipicolinate (aminotransferase route): step 1/1. In terms of biological role, involved in the synthesis of meso-diaminopimelate (m-DAP or DL-DAP), required for both lysine and peptidoglycan biosynthesis. Catalyzes the direct conversion of tetrahydrodipicolinate to LL-diaminopimelate. This Synechococcus sp. (strain WH7803) protein is LL-diaminopimelate aminotransferase.